The chain runs to 92 residues: N(2)-fixation sustaining protein CowN (92 aa).

The protein belongs to the CowN family.

In terms of biological role, is required to sustain N(2)-dependent growth in the presence of low levels of carbon monoxide (CO). Probably acts by protecting the N(2) fixation ability of the nitrogenase complex, which is inactivated in the presence of CO. This is N(2)-fixation sustaining protein CowN from Rhodobacter capsulatus (strain ATCC BAA-309 / NBRC 16581 / SB1003).